Consider the following 163-residue polypeptide: SsrA-binding protein (163 aa).

Belongs to the SmpB family.

It is found in the cytoplasm. In terms of biological role, required for rescue of stalled ribosomes mediated by trans-translation. Binds to transfer-messenger RNA (tmRNA), required for stable association of tmRNA with ribosomes. tmRNA and SmpB together mimic tRNA shape, replacing the anticodon stem-loop with SmpB. tmRNA is encoded by the ssrA gene; the 2 termini fold to resemble tRNA(Ala) and it encodes a 'tag peptide', a short internal open reading frame. During trans-translation Ala-aminoacylated tmRNA acts like a tRNA, entering the A-site of stalled ribosomes, displacing the stalled mRNA. The ribosome then switches to translate the ORF on the tmRNA; the nascent peptide is terminated with the 'tag peptide' encoded by the tmRNA and targeted for degradation. The ribosome is freed to recommence translation, which seems to be the essential function of trans-translation. This chain is SsrA-binding protein, found in Buchnera aphidicola subsp. Schizaphis graminum (strain Sg).